Reading from the N-terminus, the 92-residue chain is Putative transition state regulator Abh (92 aa).

The SpoVT-AbrB domain maps to Gly-5 to Pro-50.

The protein to B.subtilis AbrB and SpoVT.

This is Putative transition state regulator Abh (abh) from Bacillus subtilis (strain 168).